Here is a 583-residue protein sequence, read N- to C-terminus: Arginine--tRNA ligase (583 aa).

The short motif at 123–133 (PNIAKEMHVGH) is the 'HIGH' region element.

It belongs to the class-I aminoacyl-tRNA synthetase family. In terms of assembly, monomer.

The protein resides in the cytoplasm. The enzyme catalyses tRNA(Arg) + L-arginine + ATP = L-arginyl-tRNA(Arg) + AMP + diphosphate. This is Arginine--tRNA ligase from Blochmanniella floridana.